We begin with the raw amino-acid sequence, 133 residues long: Large ribosomal subunit protein uL16c (133 aa).

It belongs to the universal ribosomal protein uL16 family. Part of the 50S ribosomal subunit.

It is found in the plastid. The protein localises to the chloroplast. The protein is Large ribosomal subunit protein uL16c of Liriodendron tulipifera (Tuliptree).